The following is a 312-amino-acid chain: Malate dehydrogenase (312 aa).

NAD(+) is bound by residues 12 to 17 (GAGFTG) and Asp-36. The substrate site is built by Arg-87 and Arg-93. NAD(+) is bound by residues Asn-100 and 123–125 (LTN). Asn-125 is a substrate binding site. At Ser-149 the chain carries Phosphoserine. Arg-156 contacts substrate. The active-site Proton acceptor is the His-180.

It belongs to the LDH/MDH superfamily. MDH type 3 family.

The enzyme catalyses (S)-malate + NAD(+) = oxaloacetate + NADH + H(+). In terms of biological role, catalyzes the reversible oxidation of malate to oxaloacetate. This Bacillus pumilus (strain SAFR-032) protein is Malate dehydrogenase.